A 269-amino-acid chain; its full sequence is 5'-nucleotidase SurE (269 aa).

4 residues coordinate a divalent metal cation: aspartate 8, aspartate 9, serine 39, and asparagine 92.

The protein belongs to the SurE nucleotidase family. It depends on a divalent metal cation as a cofactor.

Its subcellular location is the cytoplasm. It carries out the reaction a ribonucleoside 5'-phosphate + H2O = a ribonucleoside + phosphate. Nucleotidase that shows phosphatase activity on nucleoside 5'-monophosphates. This chain is 5'-nucleotidase SurE, found in Psychrobacter cryohalolentis (strain ATCC BAA-1226 / DSM 17306 / VKM B-2378 / K5).